Here is a 701-residue protein sequence, read N- to C-terminus: Coiled-coil domain-containing protein 62 (701 aa).

2 coiled-coil regions span residues 61 to 197 (ETST…LQAR) and 241 to 342 (TCVV…QFLN). The interval 624–652 (KSAEREEESAALPDRRTSANEKDDFSPTS) is disordered. The span at 636–648 (PDRRTSANEKDDF) shows a compositional bias: basic and acidic residues. Short sequence motifs (LXXLL motif) lie at residues 654-658 (LQRLL) and 670-674 (LSTLL).

In terms of assembly, interacts with ESR1 and ESR2 in the presence of estradiol/E2. The interaction with ESR2 recruits CCDC62 to ER target genes, including cyclin-D1/CCND1 AP-1 promoter. Interacts with GOPC. Highly expressed in testis, not detected in other tissues (at protein level). Expressed at low levels in the epididymis, lung, spleen, bladder, kidney, liver, muscle.

The protein localises to the cytoplasm. It is found in the nucleus. It localises to the cytoplasmic vesicle. The protein resides in the secretory vesicle. Its subcellular location is the acrosome. Its function is as follows. Nuclear receptor coactivator that can enhance preferentially estrogen receptors ESR1 and ESR2 transactivation. Also modulates progesterone/PGR, glucocorticoid/NR3C1 and androgen/AR receptors transactivation, although at lower level; little effect on vitamin D receptor/VDR. Required for normal spermiogenesis. It probably plays a role in acrosome formation. This Mus musculus (Mouse) protein is Coiled-coil domain-containing protein 62 (Ccdc62).